Reading from the N-terminus, the 2832-residue chain is Cyclic beta-(1,2)-glucan synthase NdvB (2832 aa).

Helical transmembrane passes span 411-431, 444-464, 810-830, 831-851, 880-900, 938-958, and 959-979; these read FAIAGPNILLTILAMIVVYAF, IMLLLFALPASEGAMGLFNTV, LIPVAWLAASVMGWYYMEPTP, ALIWQLVLIFSLFVAPTLSLI, QVALRIVFIAHNAAMMADAIV, WTAPALALVSLALAAISDTGL, and PFIGLPFALIWAASPAVAWFV. Residues 1299–1506 form the Glycoamylase-like domain; that stretch reads LASEARLTSL…NGQLREWFHA (208 aa).

The protein belongs to the NdvB family.

The protein localises to the cell inner membrane. It carries out the reaction [(1-&gt;2)-beta-D-glucosyl](n) + UDP-alpha-D-glucose = [(1-&gt;2)-beta-D-glucosyl](n+1) + UDP + H(+). Involved in the biosynthesis of cyclic beta-(1,2)-glucan. It seems that NdvB is involved in three enzymatic activities. First, it may catalyze the transfer of the first glucose from UDP-Glc to an unknown amino acid. In the second enzymatic activity (UDP-Glc:beta-(1,2) oligosaccharide glucosyltransferase), it may be responsible for chain elongation. Finally, in the third activity, it may catalyze glucan cyclization and release from the protein. NdvB is also involved in nodule invasion and in bacteroid development. This is Cyclic beta-(1,2)-glucan synthase NdvB from Rhizobium meliloti (strain 1021) (Ensifer meliloti).